The primary structure comprises 391 residues: MALVRWRLRRGNFHLLSRVLLLKLTVVIISVLLFCEYFIYHLVIFQCHWPEVKTLAHGDRQKPVLKAMFLADTHLLGEIRGHWLDKLRREWQMERAFQTALWWLQPEVIFILGDIFDEGKWSTTEAWADDVQRFRKIFRHGSHVQLKVVIGNHDIGFHYQMSKYRIKRFEKVFSSERLFSWKGVNFVMVNSVAMEGDGCSICSEAEAELREISRKLNCSREVQGSSQCEGEQRLPFSAPVLLQHYPLYRASDANCSGEDAAPPEERNVPFEEKYDVLSREASQKLLWWLQPRLVLSGHTHSACEVLHPGGVPEVSVPSFSWRNRNNPSFIMGSLTSKDYALSKCYLPFEDRVLATYGAAAVFLVVLILAHLERLPSSFLFGWKLRKMHMRG.

The chain crosses the membrane as a helical span at residues 25 to 45 (TVVIISVLLFCEYFIYHLVIF). A divalent metal cation-binding residues include aspartate 72, aspartate 114, asparagine 152, histidine 244, histidine 298, and histidine 300. Residues 352 to 372 (VLATYGAAAVFLVVLILAHLE) traverse the membrane as a helical segment.

The protein belongs to the metallophosphoesterase superfamily. MPPE1 family. Interacts with GPI-anchor proteins (via the GPI portion). Interacts with TMED10. It depends on Mn(2+) as a cofactor.

The protein localises to the endoplasmic reticulum-Golgi intermediate compartment membrane. Metallophosphoesterase that catalyzes the removal of a side-chain ethanolamine-phosphate (EtNP) from the second mannose of the GPI-anchor protein intermediate. Participates in the glycan remodeling steps of GPI-anchor maturation to allow an efficient transport of GPI-anchor proteins from the endoplasmic reticulum to the Golgi. The chain is Metallophosphoesterase 1 from Cricetulus griseus (Chinese hamster).